The chain runs to 442 residues: tRNA-2-methylthio-N(6)-dimethylallyladenosine synthase (442 aa).

The MTTase N-terminal domain occupies 2 to 117 (QGLYIKSYGC…LPELIIKARR (116 aa)). 6 residues coordinate [4Fe-4S] cluster: Cys11, Cys47, Cys80, Cys157, Cys161, and Cys164. The region spanning 143-374 (KNQEVSAFIS…QELLREQQLA (232 aa)) is the Radical SAM core domain. A TRAM domain is found at 377 to 442 (RNMIGQTCSV…QNSVTGIVVN (66 aa)).

The protein belongs to the methylthiotransferase family. MiaB subfamily. Monomer. It depends on [4Fe-4S] cluster as a cofactor.

It is found in the cytoplasm. It carries out the reaction N(6)-dimethylallyladenosine(37) in tRNA + (sulfur carrier)-SH + AH2 + 2 S-adenosyl-L-methionine = 2-methylsulfanyl-N(6)-dimethylallyladenosine(37) in tRNA + (sulfur carrier)-H + 5'-deoxyadenosine + L-methionine + A + S-adenosyl-L-homocysteine + 2 H(+). Catalyzes the methylthiolation of N6-(dimethylallyl)adenosine (i(6)A), leading to the formation of 2-methylthio-N6-(dimethylallyl)adenosine (ms(2)i(6)A) at position 37 in tRNAs that read codons beginning with uridine. The protein is tRNA-2-methylthio-N(6)-dimethylallyladenosine synthase of Ehrlichia chaffeensis (strain ATCC CRL-10679 / Arkansas).